Here is a 212-residue protein sequence, read N- to C-terminus: Interleukin-6 (212 aa).

The N-terminal stretch at 1-27 is a signal peptide; it reads MNSFSTSAFGPVAFSLGLLLVLPAAFP. C72 and C78 are oxidised to a cystine. N73 carries N-linked (GlcNAc...) asparagine glycosylation. S81 carries the post-translational modification Phosphoserine. C101 and C111 form a disulfide bridge. The N-linked (GlcNAc...) asparagine glycan is linked to N172.

This sequence belongs to the IL-6 superfamily. Component of a hexamer of two molecules each of IL6, IL6R and IL6ST; first binds to IL6R to associate with the signaling subunit IL6ST. Interacts with IL6R (via the N-terminal ectodomain); this interaction may be affected by IL6R-binding with SORL1, hence decreasing IL6 cis signaling. Interacts with SORL1 (via the N-terminal ectodomain); this interaction leads to IL6 internalization and lysosomal degradation. May form a trimeric complex with the soluble SORL1 ectodomain and soluble IL6R receptor; this interaction might stabilize circulating IL6, hence promoting IL6 trans signaling.

The protein resides in the secreted. In terms of biological role, cytokine with a wide variety of biological functions in immunity, tissue regeneration, and metabolism. Binds to IL6R, then the complex associates to the signaling subunit IL6ST/gp130 to trigger the intracellular IL6-signaling pathway. The interaction with the membrane-bound IL6R and IL6ST stimulates 'classic signaling', whereas the binding of IL6 and soluble IL6R to IL6ST stimulates 'trans-signaling'. Alternatively, 'cluster signaling' occurs when membrane-bound IL6:IL6R complexes on transmitter cells activate IL6ST receptors on neighboring receiver cells. IL6 is a potent inducer of the acute phase response. Rapid production of IL6 contributes to host defense during infection and tissue injury, but excessive IL6 synthesis is involved in disease pathology. In the innate immune response, is synthesized by myeloid cells, such as macrophages and dendritic cells, upon recognition of pathogens through toll-like receptors (TLRs) at the site of infection or tissue injury. In the adaptive immune response, is required for the differentiation of B cells into immunoglobulin-secreting cells. Plays a major role in the differentiation of CD4(+) T cell subsets. Essential factor for the development of T follicular helper (Tfh) cells that are required for the induction of germinal-center formation. Required to drive naive CD4(+) T cells to the Th17 lineage. Also required for proliferation of myeloma cells and the survival of plasmablast cells. Functionally, acts as an essential factor in bone homeostasis and on vessels directly or indirectly by induction of VEGF, resulting in increased angiogenesis activity and vascular permeability. Induces, through 'trans-signaling' and synergistically with IL1B and TNF, the production of VEGF. Involved in metabolic controls, is discharged into the bloodstream after muscle contraction increasing lipolysis and improving insulin resistance. 'Trans-signaling' in central nervous system also regulates energy and glucose homeostasis. Mediates, through GLP-1, crosstalk between insulin-sensitive tissues, intestinal L cells and pancreatic islets to adapt to changes in insulin demand. Also acts as a myokine. Plays a protective role during liver injury, being required for maintenance of tissue regeneration. Also has a pivotal role in iron metabolism by regulating HAMP/hepcidin expression upon inflammation or bacterial infection. Through activation of IL6ST-YAP-NOTCH pathway, induces inflammation-induced epithelial regeneration. In Macaca mulatta (Rhesus macaque), this protein is Interleukin-6 (IL6).